The sequence spans 200 residues: GTP cyclohydrolase-2 (200 aa).

50-54 provides a ligand contact to GTP; it reads RIHSE. Zn(2+)-binding residues include cysteine 55, cysteine 66, and cysteine 68. Residues glutamine 71, 93–95, and threonine 115 each bind GTP; that span reads EGR. Aspartate 127 acts as the Proton acceptor in catalysis. The active-site Nucleophile is arginine 129. Positions 150 and 155 each coordinate GTP.

The protein belongs to the GTP cyclohydrolase II family. The cofactor is Zn(2+).

The enzyme catalyses GTP + 4 H2O = 2,5-diamino-6-hydroxy-4-(5-phosphoribosylamino)-pyrimidine + formate + 2 phosphate + 3 H(+). It participates in cofactor biosynthesis; riboflavin biosynthesis; 5-amino-6-(D-ribitylamino)uracil from GTP: step 1/4. Functionally, catalyzes the conversion of GTP to 2,5-diamino-6-ribosylamino-4(3H)-pyrimidinone 5'-phosphate (DARP), formate and pyrophosphate. The polypeptide is GTP cyclohydrolase-2 (Acinetobacter baylyi (strain ATCC 33305 / BD413 / ADP1)).